Here is a 491-residue protein sequence, read N- to C-terminus: 23S rRNA (uracil(1939)-C(5))-methyltransferase RlmD (491 aa).

Residues 1-10 show a composition bias toward basic and acidic residues; sequence MSDPTEHPEI. Residues 1–28 are disordered; sequence MSDPTEHPEILQDPSSSAPVQGRTDLPP. The TRAM domain occupies 18 to 81; sequence APVQGRTDLP…NNWEQASLTA (64 aa). Residues Cys94, Cys104, Cys107, and Cys186 each contribute to the [4Fe-4S] cluster site. S-adenosyl-L-methionine contacts are provided by Gln294, Phe323, Asn328, Glu344, Asn379, and Asp400. Cys447 functions as the Nucleophile in the catalytic mechanism.

Belongs to the class I-like SAM-binding methyltransferase superfamily. RNA M5U methyltransferase family. RlmD subfamily.

The catalysed reaction is uridine(1939) in 23S rRNA + S-adenosyl-L-methionine = 5-methyluridine(1939) in 23S rRNA + S-adenosyl-L-homocysteine + H(+). Functionally, catalyzes the formation of 5-methyl-uridine at position 1939 (m5U1939) in 23S rRNA. The chain is 23S rRNA (uracil(1939)-C(5))-methyltransferase RlmD from Paracidovorax citrulli (strain AAC00-1) (Acidovorax citrulli).